Reading from the N-terminus, the 946-residue chain is Villin-4 (946 aa).

4 Gelsolin-like repeats span residues 28-109 (NFKP…ETEK), 152-219 (VHVK…EDGK), 274-339 (LEHE…TIMF), and 641-715 (EIHH…PQFF). Disordered stretches follow at residues 744-789 (ATPS…GRSP), 801-832 (PSTR…SSKQ), and 844-902 (GPTK…PAPD). Positions 765–777 (QDKSQQRTRSMSH) are enriched in polar residues. Acidic residues predominate over residues 874–883 (SENEPEDDEN). One can recognise an HP domain in the interval 881–946 (DENSTIYPYE…NRLKSDLQLF (66 aa)).

It belongs to the villin/gelsolin family.

It is found in the cytoplasm. It localises to the cytoskeleton. Ca(2+)-regulated actin-binding protein. Binds actin microfilaments (MFs). Involved in actin filament bundling, severing and capping. Caps the barbed end of actin filaments and is able to sever them in a calcium-dependent manner. The protein is Villin-4 of Oryza sativa subsp. japonica (Rice).